The sequence spans 140 residues: Small ribosomal subunit protein uS12 (140 aa).

3-methylthioaspartic acid is present on D102. Residues 121–140 (ANRQQSRSKYGAKKPKAAKK) are disordered. Residues 130-140 (YGAKKPKAAKK) show a composition bias toward basic residues.

This sequence belongs to the universal ribosomal protein uS12 family. As to quaternary structure, part of the 30S ribosomal subunit. Contacts proteins S8 and S17. May interact with IF1 in the 30S initiation complex.

With S4 and S5 plays an important role in translational accuracy. Its function is as follows. Interacts with and stabilizes bases of the 16S rRNA that are involved in tRNA selection in the A site and with the mRNA backbone. Located at the interface of the 30S and 50S subunits, it traverses the body of the 30S subunit contacting proteins on the other side and probably holding the rRNA structure together. The combined cluster of proteins S8, S12 and S17 appears to hold together the shoulder and platform of the 30S subunit. This is Small ribosomal subunit protein uS12 from Alkaliphilus oremlandii (strain OhILAs) (Clostridium oremlandii (strain OhILAs)).